Here is a 448-residue protein sequence, read N- to C-terminus: UPF0210 protein Pisl_0759 (448 aa).

This sequence belongs to the UPF0210 family.

This Pyrobaculum islandicum (strain DSM 4184 / JCM 9189 / GEO3) protein is UPF0210 protein Pisl_0759.